A 478-amino-acid chain; its full sequence is Leukotoxin secretion protein D (478 aa).

Over Met1–Leu59 the chain is Cytoplasmic. Residues Ile60 to Val80 traverse the membrane as a helical segment. Over Glu81 to Arg478 the chain is Periplasmic.

Belongs to the membrane fusion protein (MFP) (TC 8.A.1) family.

The protein resides in the cell inner membrane. Its function is as follows. Involved in the transport of the Leukotoxin. The polypeptide is Leukotoxin secretion protein D (lktD) (Mannheimia haemolytica (Pasteurella haemolytica)).